The primary structure comprises 132 residues: Ribosome-binding factor A (132 aa).

This sequence belongs to the RbfA family. As to quaternary structure, monomer. Binds 30S ribosomal subunits, but not 50S ribosomal subunits or 70S ribosomes.

The protein localises to the cytoplasm. Functionally, one of several proteins that assist in the late maturation steps of the functional core of the 30S ribosomal subunit. Associates with free 30S ribosomal subunits (but not with 30S subunits that are part of 70S ribosomes or polysomes). Required for efficient processing of 16S rRNA. May interact with the 5'-terminal helix region of 16S rRNA. This chain is Ribosome-binding factor A, found in Burkholderia lata (strain ATCC 17760 / DSM 23089 / LMG 22485 / NCIMB 9086 / R18194 / 383).